The primary structure comprises 195 residues: Probable GTP-binding protein EngB (195 aa).

One can recognise an EngB-type G domain in the interval 24–195 (ELPEIALAGR…EAWDAILEKL (172 aa)). Residues 32–39 (GRSNVGKS), 59–63 (GKTQL), 77–80 (DVPG), 144–147 (TKAD), and 176–178 (FSS) contribute to the GTP site. Positions 39 and 61 each coordinate Mg(2+).

It belongs to the TRAFAC class TrmE-Era-EngA-EngB-Septin-like GTPase superfamily. EngB GTPase family. Mg(2+) is required as a cofactor.

Its function is as follows. Necessary for normal cell division and for the maintenance of normal septation. The sequence is that of Probable GTP-binding protein EngB from Streptococcus pneumoniae (strain P1031).